A 560-amino-acid polypeptide reads, in one-letter code: MTFQRPLYIPFAGPALLESPLLNKGSAFSQEERNNFNLTGLLPHNIETIESQSTRAYQQLSSFKSDLDKHIYLRNIQDTNETLFHHLIENHLEEVMPLIYTPTVGLACEQFSKIYRRKRGLFVSYPERHKIDDMLQNATKQNVKVIVVTDGERILGLGDQGIGGMGIPIGKLALYTACGGISPAYCLPIVLDVGTNNSQLLADPMYMGWRNPRITGEEYNEFVDLFIQAVKRRWPEVLLQFEDFAQTNATPLLNKYRDQICCFNDDIQGTAAVSVGTLIAACQNKGEKLSDQRIAFLGSGSAGCGIAQHIVRQMQREGLTQEQARQRVFMVDRYGLLTDQMTNLQAFQQPLIQYTKDLSHWDISSHIGLEQVIKQGNISVLFGVSGQPGLFTQEVVESLCANVDHPIVLPLSNPTSRVEATPKDITTWSHGQAIVATGSPFPPTLYENEYIEVSQCNNSYIFPGIGLGVLAARATAISDNMLMAASQALADASMQYEKVKGALLPPLGEIRPISKSIAYAVAKQAIADGLALPVSEETMQRRLVDNFWAPKYRTYRRTSF.

Catalysis depends on tyrosine 100, which acts as the Proton donor. Arginine 153 contributes to the NAD(+) binding site. Residue lysine 171 is the Proton acceptor of the active site. Glutamate 242, aspartate 243, and aspartate 266 together coordinate a divalent metal cation. 2 residues coordinate NAD(+): aspartate 266 and asparagine 413.

This sequence belongs to the malic enzymes family. In terms of assembly, homotetramer. Mg(2+) is required as a cofactor. The cofactor is Mn(2+).

The enzyme catalyses (S)-malate + NAD(+) = pyruvate + CO2 + NADH. It catalyses the reaction oxaloacetate + H(+) = pyruvate + CO2. This Psychromonas ingrahamii (strain DSM 17664 / CCUG 51855 / 37) protein is NAD-dependent malic enzyme.